Reading from the N-terminus, the 83-residue chain is MASNASADVTTMTFERAIEELESIVKRLEDGKVPLEESVAIYERGETLKRRCEELLRQAEARVDKITTDANGAPVGTEPLDVR.

It belongs to the XseB family. Heterooligomer composed of large and small subunits.

The protein localises to the cytoplasm. The catalysed reaction is Exonucleolytic cleavage in either 5'- to 3'- or 3'- to 5'-direction to yield nucleoside 5'-phosphates.. Functionally, bidirectionally degrades single-stranded DNA into large acid-insoluble oligonucleotides, which are then degraded further into small acid-soluble oligonucleotides. The protein is Exodeoxyribonuclease 7 small subunit of Afipia carboxidovorans (strain ATCC 49405 / DSM 1227 / KCTC 32145 / OM5) (Oligotropha carboxidovorans).